Reading from the N-terminus, the 458-residue chain is UDP-N-acetylmuramoylalanine--D-glutamate ligase (458 aa).

ATP is bound at residue 124 to 130 (GSDGKTT).

It belongs to the MurCDEF family.

It is found in the cytoplasm. It catalyses the reaction UDP-N-acetyl-alpha-D-muramoyl-L-alanine + D-glutamate + ATP = UDP-N-acetyl-alpha-D-muramoyl-L-alanyl-D-glutamate + ADP + phosphate + H(+). It functions in the pathway cell wall biogenesis; peptidoglycan biosynthesis. Cell wall formation. Catalyzes the addition of glutamate to the nucleotide precursor UDP-N-acetylmuramoyl-L-alanine (UMA). This is UDP-N-acetylmuramoylalanine--D-glutamate ligase from Clostridium tetani (strain Massachusetts / E88).